Reading from the N-terminus, the 102-residue chain is PE family immunomodulator PE15 (102 aa).

The PE domain maps to 3–91; the sequence is LRVVPESLAG…SGASYAARDA (89 aa).

Belongs to the mycobacterial PE family.

The protein resides in the secreted. Its subcellular location is the cell envelope. It localises to the cell surface. Functionally, may play a pivotal role in the evasion of host immune response by M.tuberculosis. Mediates production of IL-10 via activation of the p38 and ERK1/2 mitogen-activated protein kinase (MAPK) signaling pathways. The sequence is that of PE family immunomodulator PE15 (PE15) from Mycobacterium tuberculosis (strain CDC 1551 / Oshkosh).